Reading from the N-terminus, the 130-residue chain is Histone H2A type 1 (130 aa).

Residues 1–22 (MSGRGKQGGKTRAKAKTRSSRA) are disordered. Ser-2 carries the post-translational modification N-acetylserine. Phosphoserine is present on Ser-2. Lys-6 is modified (N6-(2-hydroxyisobutyryl)lysine). Position 6 is an N6-acetyllysine (Lys-6). Over residues 7 to 19 (QGGKTRAKAKTRS) the composition is skewed to basic residues. The residue at position 10 (Lys-10) is an N6-(2-hydroxyisobutyryl)lysine; alternate. Lys-10 carries the N6-lactoyllysine; alternate modification. N6-succinyllysine is present on Lys-10. Residues Lys-14 and Lys-16 each participate in a glycyl lysine isopeptide (Lys-Gly) (interchain with G-Cter in ubiquitin) cross-link. The residue at position 37 (Lys-37) is an N6-(2-hydroxyisobutyryl)lysine; alternate. 2 positions are modified to N6-(2-hydroxyisobutyryl)lysine: Lys-75 and Lys-76. Lys-96 carries the post-translational modification N6-(2-hydroxyisobutyryl)lysine; alternate. An N6-succinyllysine modification is found at Lys-96. The residue at position 96 (Lys-96) is an N6-glutaryllysine; alternate. Gln-105 is modified (N5-methylglutamine). Position 119 is an N6-(2-hydroxyisobutyryl)lysine; alternate (Lys-119). Lys-119 is modified (N6-glutaryllysine; alternate). Lys-120 is covalently cross-linked (Glycyl lysine isopeptide (Lys-Gly) (interchain with G-Cter in ubiquitin)).

It belongs to the histone H2A family. The nucleosome is a histone octamer containing two molecules each of H2A, H2B, H3 and H4 assembled in one H3-H4 heterotetramer and two H2A-H2B heterodimers. The octamer wraps approximately 147 bp of DNA. Post-translationally, monoubiquitination of Lys-120 (H2AK119Ub) gives a specific tag for epigenetic transcriptional repression. Following DNA double-strand breaks (DSBs), it is ubiquitinated through 'Lys-63' linkage of ubiquitin moieties, leading to the recruitment of repair proteins to sites of DNA damage. H2AK119Ub and ionizing radiation-induced 'Lys-63'-linked ubiquitination are distinct events. Phosphorylation on Ser-2 is enhanced during mitosis. Phosphorylation on Ser-2 directly represses transcription. In terms of processing, glutamine methylation at Gln-105 (H2AQ104me) by FBL is specifically dedicated to polymerase I. It is present at 35S ribosomal DNA locus and impairs binding of the FACT complex.

It is found in the nucleus. The protein resides in the chromosome. Core component of nucleosome. Nucleosomes wrap and compact DNA into chromatin, limiting DNA accessibility to the cellular machineries which require DNA as a template. Histones thereby play a central role in transcription regulation, DNA repair, DNA replication and chromosomal stability. DNA accessibility is regulated via a complex set of post-translational modifications of histones, also called histone code, and nucleosome remodeling. The chain is Histone H2A type 1 from Xenopus laevis (African clawed frog).